The chain runs to 203 residues: ATP synthase subunit b (203 aa).

A helical membrane pass occupies residues 14-34 (FVWPLLGAGLLLAAEGVAWAS).

Belongs to the ATPase B chain family. As to quaternary structure, F-type ATPases have 2 components, F(1) - the catalytic core - and F(0) - the membrane proton channel. F(1) has five subunits: alpha(3), beta(3), gamma(1), delta(1), epsilon(1). F(0) has three main subunits: a(1), b(2) and c(10-14). The alpha and beta chains form an alternating ring which encloses part of the gamma chain. F(1) is attached to F(0) by a central stalk formed by the gamma and epsilon chains, while a peripheral stalk is formed by the delta and b chains.

It is found in the cell inner membrane. In terms of biological role, f(1)F(0) ATP synthase produces ATP from ADP in the presence of a proton or sodium gradient. F-type ATPases consist of two structural domains, F(1) containing the extramembraneous catalytic core and F(0) containing the membrane proton channel, linked together by a central stalk and a peripheral stalk. During catalysis, ATP synthesis in the catalytic domain of F(1) is coupled via a rotary mechanism of the central stalk subunits to proton translocation. Component of the F(0) channel, it forms part of the peripheral stalk, linking F(1) to F(0). The polypeptide is ATP synthase subunit b (Syntrophobacter fumaroxidans (strain DSM 10017 / MPOB)).